A 307-amino-acid polypeptide reads, in one-letter code: Putative F-box protein PP2-B6 (307 aa).

Positions 42 to 88 (HSPFDDLPEDCISNIISFTSPRDVCVSASVSKSFAHAVQCDSIWEKF) constitute an F-box domain.

The sequence is that of Putative F-box protein PP2-B6 (PP2B6) from Arabidopsis thaliana (Mouse-ear cress).